The sequence spans 599 residues: Fructan 1-exohydrolase (599 aa).

The first 16 residues, 1-16 (MAQAWAFLLLPALALA), serve as a signal peptide directing secretion. Asp78 is an active-site residue. Residues Asn171, Asn239, and Asn251 are each glycosylated (N-linked (GlcNAc...) asparagine). Cys449 and Cys495 are disulfide-bonded.

This sequence belongs to the glycosyl hydrolase 32 family.

It carries out the reaction Hydrolysis of terminal, non-reducing (2-&gt;1)-linked beta-D-fructofuranose residues in fructans.. Its activity is regulated as follows. Inhibited by sucrose. In terms of biological role, hydrolyzes inulin-type beta-(2,1)-fructans. May play a role as a beta-(2,1)-trimmer during graminan biosynthesis. The protein is Fructan 1-exohydrolase of Hordeum vulgare (Barley).